Reading from the N-terminus, the 454-residue chain is Putative tyrosine kinase 36 (454 aa).

ATP is bound by residues 80-88 (LGSGSFGKV) and lysine 98. Aspartate 192 serves as the catalytic Proton acceptor.

It belongs to the protein kinase superfamily. Tyr protein kinase family.

The enzyme catalyses L-tyrosyl-[protein] + ATP = O-phospho-L-tyrosyl-[protein] + ADP + H(+). The sequence is that of Putative tyrosine kinase 36 (36) from Alcelaphine herpesvirus 1 (strain C500) (AlHV-1).